We begin with the raw amino-acid sequence, 288 residues long: ATP synthase gamma chain (288 aa).

The protein belongs to the ATPase gamma chain family. F-type ATPases have 2 components, CF(1) - the catalytic core - and CF(0) - the membrane proton channel. CF(1) has five subunits: alpha(3), beta(3), gamma(1), delta(1), epsilon(1). CF(0) has three main subunits: a, b and c.

The protein localises to the cell membrane. Produces ATP from ADP in the presence of a proton gradient across the membrane. The gamma chain is believed to be important in regulating ATPase activity and the flow of protons through the CF(0) complex. The protein is ATP synthase gamma chain of Staphylococcus epidermidis (strain ATCC 35984 / DSM 28319 / BCRC 17069 / CCUG 31568 / BM 3577 / RP62A).